Consider the following 118-residue polypeptide: UPF0102 protein Dtur_1530 (118 aa).

It belongs to the UPF0102 family.

The chain is UPF0102 protein Dtur_1530 from Dictyoglomus turgidum (strain DSM 6724 / Z-1310).